The sequence spans 126 residues: SH2 domain-containing protein 1A (126 aa).

The SH2 domain occupies 6 to 102; sequence VYHGKISREM…GIVTPLQYPV (97 aa). Residues 67–92 form an interaction with FYN SH3 domain region; it reads ETAPGVHKRFFRKVKNLISAFQKPDQ. At lysine 89 the chain carries N6-acetyllysine. The segment at 100 to 126 is disordered; the sequence is YPVEKSSARSPQAPTGRRDSDICLKAP. The span at 115 to 126 shows a compositional bias: basic and acidic residues; it reads GRRDSDICLKAP. Phosphoserine is present on serine 119.

In terms of assembly, interacts with CD84, CD244, LY9, SLAMF1 and FYN. Interacts with NTRK1, NTRK2 and NTRK3.

It is found in the cytoplasm. In terms of biological role, cytoplasmic adapter regulating receptors of the signaling lymphocytic activation molecule (SLAM) family such as SLAMF1, CD244, LY9, CD84, SLAMF6 and SLAMF7. In SLAM signaling seems to cooperate with SH2D1B/EAT-2. Initially it has been proposed that association with SLAMF1 prevents SLAMF1 binding to inhibitory effectors including INPP5D/SHIP1 and PTPN11/SHP-2. However, by simultaneous interactions, recruits FYN which subsequently phosphorylates and activates SLAMF1. Positively regulates CD244/2B4- and CD84-mediated natural killer (NK) cell functions. Can also promote CD48-, SLAMF6 -, LY9-, and SLAMF7-mediated NK cell activation. In the context of NK cell-mediated cytotoxicity enhances conjugate formation with target cells. May also regulate the activity of the neurotrophin receptors NTRK1, NTRK2 and NTRK3. The chain is SH2 domain-containing protein 1A (Sh2d1a) from Rattus norvegicus (Rat).